We begin with the raw amino-acid sequence, 1401 residues long: Lysine-specific demethylase 6A (1401 aa).

The tract at residues 1–1095 (MKSCGVSLAT…TNIDLSDDKK (1095 aa)) is interaction with SUPT6H. 8 TPR repeats span residues 95–128 (SDFF…QSDY), 132–165 (AAFL…DPSF), 169–203 (KEIH…NPCT), 207–240 (AEIQ…ENLS), 245–285 (ATIL…DPNS), 286–319 (GQSW…SEAS), 321–353 (DTWC…DHGH), and 355–387 (AAWM…KNCS). Polar residues predominate over residues 439 to 453 (AMNTAQQNTSDNWSG). The disordered stretch occupies residues 439–463 (AMNTAQQNTSDNWSGGNAPPPVEQQ). An omega-N-methylarginine mark is found at R519 and R549. 3 stretches are compositionally biased toward polar residues: residues 596–606 (NHVTGSGSNGN), 619–642 (HNRT…STQG), and 660–743 (LSST…STAS). Residues 596–745 (NHVTGSGSNG…ETPNSTASVE (150 aa)) form a disordered region. The residue at position 769 (S769) is a Phosphoserine. Disordered regions lie at residues 795–863 (GTCD…EESQ), 914–941 (LLDK…PPTP), and 1043–1080 (FQES…GPFK). The segment covering 814-833 (SVASSPSSAISTATPSPKST) has biased composition (low complexity). Residue T827 is modified to Phosphothreonine. The residue at position 829 (S829) is a Phosphoserine. Over residues 834–848 (EQTTTNSVTSLNSPH) the composition is skewed to polar residues. The segment covering 918-931 (CPPPRPPSSPYPPL) has biased composition (pro residues). Residues 1046-1063 (SLREENEKRSHHKDHSDS) show a composition bias toward basic and acidic residues. The JmjC domain occupies 1095 to 1258 (KWKLQLHELT…YKLAVERYEW (164 aa)). Positions 1146, 1148, and 1226 each coordinate Fe cation. Zn(2+) is bound by residues C1331, C1334, C1358, and C1361.

Belongs to the UTX family. As to quaternary structure, component of the MLL2/3 complex (also named ASCOM complex), at least composed of KMT2D/MLL2 or KMT2C/MLL3, ASH2L, RBBP5, WDR5, NCOA6, DPY30, KDM6A (or KDM6B), PAXIP1/PTIP, PAGR1 and alpha- and beta-tubulin. Interacts with TLE1. Interacts with SUPT6H. Interacts with SMARCA4. Interacts with PROSER1. L-ascorbate is required as a cofactor. It depends on Fe(2+) as a cofactor. Expressed in brain, heart and spleen.

Its subcellular location is the nucleus. It catalyses the reaction N(6),N(6),N(6)-trimethyl-L-lysyl(27)-[histone H3] + 2 2-oxoglutarate + 2 O2 = N(6)-methyl-L-lysyl(27)-[histone H3] + 2 formaldehyde + 2 succinate + 2 CO2. Histone demethylase that specifically demethylates 'Lys-27' of histone H3, thereby playing a central role in histone code. Demethylates trimethylated and dimethylated but not monomethylated H3 'Lys-27'. Plays a central role in regulation of posterior development, by regulating HOX gene expression. Demethylation of 'Lys-27' of histone H3 is concomitant with methylation of 'Lys-4' of histone H3, and regulates the recruitment of the PRC1 complex and monoubiquitination of histone H2A. Plays a demethylase-independent role in chromatin remodeling to regulate T-box family member-dependent gene expression. This chain is Lysine-specific demethylase 6A (Kdm6a), found in Mus musculus (Mouse).